A 287-amino-acid chain; its full sequence is METTKKLSPIFCFSSLLCLFFTMNQAVSETDHMDTFCIDSSRNTTGNTTYNKNLNTMLSTFRNQSSIVNNYNLTTGLASDTVYGMFLCTGDVNITTCNNCVKNATIEIVKNCTNHREAIIYYIDCMVRYSDKFFLSTFEKKPNSIWSGDDPIPKSLGPFKKRLYKKMGEAIVRSSTLSSALTPYYYLDVTRFDGSYDLDSLVQCSPHLNPENCTICLEYALQEIIDCCSDKFWAMIFTPNCFVNYMITTSPLPPLPSPYHHSGSCSIRGNSEIFWGMIILAALVFTF.

A signal peptide spans 1–26 (METTKKLSPIFCFSSLLCLFFTMNQA). 2 consecutive Gnk2-homologous domains span residues 32 to 134 (HMDT…DKFF) and 140 to 250 (KKPN…ITTS). Residues N43, N47, N63, N72, N93, N103, N111, and N212 are each glycosylated (N-linked (GlcNAc...) asparagine).

It belongs to the cysteine-rich repeat secretory protein family.

It localises to the secreted. The polypeptide is Cysteine-rich repeat secretory protein 59 (CRRSP59) (Arabidopsis thaliana (Mouse-ear cress)).